Consider the following 783-residue polypeptide: Protein SCARECROW (783 aa).

Positions 298-387 are disordered; sequence QPQSQDAITH…QSPPASENTA (90 aa). 2 stretches are compositionally biased toward low complexity: residues 342 to 353 and 372 to 384; these read PSSLPFVPVPSS and ESQSQSQSPPASE. Residues 387 to 418 adopt a coiled-coil conformation; the sequence is AAAALIRTESIMRREKEELEQQKKDEEGLHLL. The region spanning 408-777 is the GRAS domain; sequence QKKDEEGLHL…LCLLTASAWR (370 aa). Positions 415-478 are leucine repeat I (LRI); it reads LHLLTLLLQC…LVNSCLGIYA (64 aa). A LxCxE motif motif is present at residues 422-426; it reads LQCAE. The VHIID stretch occupies residues 497–562; that stretch reads FQVFNGISPF…GGPPLVRLTG (66 aa). Positions 528-532 match the VHIID motif; sequence VHIID. Residues 572–604 are leucine repeat II (LRII); the sequence is ATGKRLSDFAQKLGLPFEFFPVADKVGNLDPQR. The tract at residues 613–700 is PFYRE; it reads VAVHWLQHSL…QQLLSREIRN (88 aa). Positions 703–777 are SAW; that stretch reads AVGGPSRSGE…LCLLTASAWR (75 aa).

Belongs to the GRAS family.

The protein resides in the nucleus. Its function is as follows. Putative transcription factor involved in asymmetric cell division. Required for differentiation of endodermis and graviresponses. This is Protein SCARECROW (SCR) from Ipomoea nil (Japanese morning glory).